Reading from the N-terminus, the 894-residue chain is Glutamate receptor 3 (894 aa).

An N-terminal signal peptide occupies residues 1 to 28; it reads MARQKKMGQNVLRAVFFLVLGLLGHSHG. At 29–552 the chain is on the extracellular side; sequence GFPNTISIGG…GVFSFLDPLA (524 aa). Asn63, Asn266, Asn380, Asn415, and Asn422 each carry an N-linked (GlcNAc...) asparagine glycan. Cys91 and Cys340 are joined by a disulfide. L-glutamate is bound by residues Pro508, Thr510, and Arg515. A helical membrane pass occupies residues 553-573; sequence YEIWMCIVFASIGVSVVLFLV. The Cytoplasmic segment spans residues 574–602; that stretch reads SRFSPYEWHLEDNNEEPRDPQSPPDPPNE. The helical; Pore-forming intramembrane region spans 603–618; that stretch reads FGIFNSLWFSLGAFMQ. Residues 619–621 lie within the membrane without spanning it; sequence QGC. Cys621 carries the S-palmitoyl cysteine lipid modification. Over 622–627 the chain is Cytoplasmic; sequence DISPRS. A helical transmembrane segment spans residues 628–648; it reads LSGRIVGGVWWFFTLIIISSY. Residues 649–823 are Extracellular-facing; sequence TANLAAFLTV…DKTSALSLSN (175 aa). L-glutamate-binding residues include Ser686, Thr687, and Glu737. The cysteines at positions 750 and 805 are disulfide-linked. A helical membrane pass occupies residues 824 to 844; it reads VAGVFYILVGGLGLAMMVALI. Residues 845 to 894 are Cytoplasmic-facing; it reads EFCYKSRAESKRMKLTKNTQNFKPAPATNTQNYATYREGYNVYGTESVKI. Residue Cys847 is the site of S-palmitoyl cysteine attachment. Phosphotyrosine occurs at positions 877 and 887.

This sequence belongs to the glutamate-gated ion channel (TC 1.A.10.1) family. GRIA3 subfamily. In terms of assembly, homotetramer or heterotetramer of pore-forming glutamate receptor subunits. Tetramers may be formed by the dimerization of dimers. Interacts with PICK1, GRIP1 and GRIP2. Found in a complex with GRIA1, GRIA2, GRIA4, CNIH2, CNIH3, CACNG2, CACNG3, CACNG4, CACNG5, CACNG7 and CACNG8. Interacts with CACNG5. Found in a complex with GRIA1, GRIA2, GRIA4, DLG4, CACNG8 and CNIH2.

It is found in the cell membrane. The protein localises to the postsynaptic cell membrane. The protein resides in the postsynaptic density membrane. The enzyme catalyses Ca(2+)(in) = Ca(2+)(out). Functionally, ionotropic glutamate receptor that functions as a ligand-gated cation channel, gated by L-glutamate and glutamatergic agonists such as alpha-amino-3-hydroxy-5-methyl-4-isoxazolepropionic acid (AMPA), quisqualic acid, and kainic acid. L-glutamate acts as an excitatory neurotransmitter at many synapses in the central nervous system and plays an important role in fast excitatory synaptic transmission by inducing long-term potentiation. Binding of the excitatory neurotransmitter L-glutamate induces a conformation change, leading to the opening of the cation channel, and thereby converts the chemical signal to an electrical impulse upon entry of calcium. The receptor then desensitizes rapidly and enters a transient inactive state, characterized by the presence of bound agonist. In the presence of CACNG8, shows resensitization which is characterized by a delayed accumulation of current flux upon continued application of glutamate. The sequence is that of Glutamate receptor 3 from Macaca fascicularis (Crab-eating macaque).